The sequence spans 428 residues: Histidinol dehydrogenase (428 aa).

Positions 234, 256, and 259 each coordinate substrate. Gln256 and His259 together coordinate Zn(2+). Residues Glu323 and His324 each act as proton acceptor in the active site. The substrate site is built by His324, Asp357, Glu411, and His416. Asp357 provides a ligand contact to Zn(2+). Zn(2+) is bound at residue His416.

This sequence belongs to the histidinol dehydrogenase family. Requires Zn(2+) as cofactor.

It carries out the reaction L-histidinol + 2 NAD(+) + H2O = L-histidine + 2 NADH + 3 H(+). It participates in amino-acid biosynthesis; L-histidine biosynthesis; L-histidine from 5-phospho-alpha-D-ribose 1-diphosphate: step 9/9. Its function is as follows. Catalyzes the sequential NAD-dependent oxidations of L-histidinol to L-histidinaldehyde and then to L-histidine. The chain is Histidinol dehydrogenase from Campylobacter jejuni subsp. jejuni serotype O:2 (strain ATCC 700819 / NCTC 11168).